The chain runs to 235 residues: 2-C-methyl-D-erythritol 4-phosphate cytidylyltransferase (235 aa).

It belongs to the IspD/TarI cytidylyltransferase family. IspD subfamily.

It carries out the reaction 2-C-methyl-D-erythritol 4-phosphate + CTP + H(+) = 4-CDP-2-C-methyl-D-erythritol + diphosphate. It participates in isoprenoid biosynthesis; isopentenyl diphosphate biosynthesis via DXP pathway; isopentenyl diphosphate from 1-deoxy-D-xylulose 5-phosphate: step 2/6. Functionally, catalyzes the formation of 4-diphosphocytidyl-2-C-methyl-D-erythritol from CTP and 2-C-methyl-D-erythritol 4-phosphate (MEP). This chain is 2-C-methyl-D-erythritol 4-phosphate cytidylyltransferase, found in Pseudomonas fluorescens (strain SBW25).